The chain runs to 537 residues: NAD(P)H-quinone oxidoreductase chain 4 3 (537 aa).

Transmembrane regions (helical) follow at residues 6–26, 36–56, 87–107, 115–135, 136–156, 169–189, 209–229, 243–263, 277–297, 314–334, 335–355, 387–407, and 417–437; these read FPWLTAIIALPLVAALAIPII, WYGLGVAFADFALMIAAFWHY, LSMPLLLLTGLINTLAIFAAW, LFYGLMLVMYSAQLGVFVAQD, LLLFFLMWEIELVPVYLLISI, FILYTAAASIFILVAGFALAF, AIELLAYAGFLIAFGVKLPIF, SAPGSMILAGVLLKMGGYALI, FAPVLAILGVVNIVYGACCAF, MGFVLIGLASYTEIGVSGAVL, QMVSHGLVAASLFFLTGVTYE, LALPGMSGFVGELMVFIGIAT, and VVVVLLSAVGVILTPIYLLSL.

This sequence belongs to the complex I subunit 4 family.

The protein resides in the cellular thylakoid membrane. It catalyses the reaction a plastoquinone + NADH + (n+1) H(+)(in) = a plastoquinol + NAD(+) + n H(+)(out). The enzyme catalyses a plastoquinone + NADPH + (n+1) H(+)(in) = a plastoquinol + NADP(+) + n H(+)(out). Functionally, NDH-1 shuttles electrons from NAD(P)H, via FMN and iron-sulfur (Fe-S) centers, to quinones in the respiratory chain. The immediate electron acceptor for the enzyme in this species is believed to be plastoquinone. Couples the redox reaction to proton translocation (for every two electrons transferred, four hydrogen ions are translocated across the cytoplasmic membrane), and thus conserves the redox energy in a proton gradient. The chain is NAD(P)H-quinone oxidoreductase chain 4 3 from Trichormus variabilis (strain ATCC 29413 / PCC 7937) (Anabaena variabilis).